A 224-amino-acid chain; its full sequence is UPF0758 protein PSPPH_0210 (224 aa).

The MPN domain maps to 102-224 (ALENPTQVRN…PLSMVERGLM (123 aa)). Zn(2+) is bound by residues histidine 173, histidine 175, and aspartate 186. The JAMM motif motif lies at 173–186 (HNHPSGITTPSRSD).

This sequence belongs to the UPF0758 family.

In Pseudomonas savastanoi pv. phaseolicola (strain 1448A / Race 6) (Pseudomonas syringae pv. phaseolicola (strain 1448A / Race 6)), this protein is UPF0758 protein PSPPH_0210.